The primary structure comprises 131 residues: Large ribosomal subunit protein bL17 (131 aa).

It belongs to the bacterial ribosomal protein bL17 family. In terms of assembly, part of the 50S ribosomal subunit. Contacts protein L32.

The chain is Large ribosomal subunit protein bL17 from Cupriavidus necator (strain ATCC 17699 / DSM 428 / KCTC 22496 / NCIMB 10442 / H16 / Stanier 337) (Ralstonia eutropha).